We begin with the raw amino-acid sequence, 228 residues long: uncharacterized protein (228 aa).

5 helical membrane passes run 14 to 34 (HTIS…MLLV), 42 to 62 (VALF…AITL), 130 to 150 (FIFS…LVGS), 156 to 176 (FSFD…VLFM), and 192 to 212 (IVIA…LIAL).

This sequence belongs to the AzlC family.

It is found in the cell membrane. This is an uncharacterized protein from Helicobacter pylori (strain ATCC 700392 / 26695) (Campylobacter pylori).